Here is a 208-residue protein sequence, read N- to C-terminus: Uracil phosphoribosyltransferase (208 aa).

Residues Arg-78, Arg-103, and 130-138 (DPMLATGGS) each bind 5-phospho-alpha-D-ribose 1-diphosphate. Residues Ile-193 and 198–200 (GDA) each bind uracil. Residue Asp-199 participates in 5-phospho-alpha-D-ribose 1-diphosphate binding.

This sequence belongs to the UPRTase family. Mg(2+) is required as a cofactor.

The enzyme catalyses UMP + diphosphate = 5-phospho-alpha-D-ribose 1-diphosphate + uracil. Its pathway is pyrimidine metabolism; UMP biosynthesis via salvage pathway; UMP from uracil: step 1/1. Allosterically activated by GTP. Its function is as follows. Catalyzes the conversion of uracil and 5-phospho-alpha-D-ribose 1-diphosphate (PRPP) to UMP and diphosphate. The sequence is that of Uracil phosphoribosyltransferase from Aliivibrio fischeri (strain MJ11) (Vibrio fischeri).